Reading from the N-terminus, the 278-residue chain is Large ribosomal subunit protein uL2 (278 aa).

Over residues 210–219 (RKRWLGKRPQ) the composition is skewed to basic residues. Residues 210–278 (RKRWLGKRPQ…LIIRHRKGSK (69 aa)) form a disordered region. Over residues 258–270 (KTRDVKKASEKLI) the composition is skewed to basic and acidic residues.

This sequence belongs to the universal ribosomal protein uL2 family. As to quaternary structure, part of the 50S ribosomal subunit. Forms a bridge to the 30S subunit in the 70S ribosome.

One of the primary rRNA binding proteins. Required for association of the 30S and 50S subunits to form the 70S ribosome, for tRNA binding and peptide bond formation. It has been suggested to have peptidyltransferase activity; this is somewhat controversial. Makes several contacts with the 16S rRNA in the 70S ribosome. This is Large ribosomal subunit protein uL2 from Lactobacillus acidophilus (strain ATCC 700396 / NCK56 / N2 / NCFM).